We begin with the raw amino-acid sequence, 506 residues long: Procardosin-B (506 aa).

An N-terminal signal peptide occupies residues 1–24 (MGTPIKASLLALFLFFLLSPTAFS). Positions 25–70 (VSNGGLLRVGLKKRKVDRLDQLRAHGVHMLGNARKDFGFRRTLSDS) are excised as a propeptide. The Peptidase A1 domain occupies 85–503 (YYGEIGIGTP…DYGKLRVGFA (419 aa)). Asp103 is a catalytic residue. Cys116 and Cys122 form a disulfide bridge. Residues Asn139 and Asn252 are each glycosylated (N-linked (GlcNAc...) asparagine). Cys281 and Cys285 are joined by a disulfide. Residue Asp290 is part of the active site. The Saposin B-type domain occupies 315–417 (VLNQQCKTLV…NEVCDQLPTS (103 aa)). Disulfide bonds link Cys320/Cys411, Cys345/Cys383, Cys351/Cys380, and Cys425/Cys462. Asn397 carries N-linked (GlcNAc...) asparagine glycosylation.

It belongs to the peptidase A1 family. Heterodimer of a light chain and a heavy chain. An intermediate form is produced first, and undergoes proteolytic processing to remove the internal plant-specific insert (PSI) and the propeptide. As to expression, detected in pistils, but not in seeds, bracts, midribs, roots, leaves or stamen extracts. Detected in seeds. In stigmas and styles, detected in the transmitting tissue and in contiguous subepidermal layers at the longitudenal grooves of the stigma (at protein level).

It is found in the microsome membrane. The protein localises to the protein storage vacuole. Its subcellular location is the secreted. It localises to the cell wall. The protein resides in the extracellular space. It is found in the extracellular matrix. Inhibited by the specific aspartic proteinase inhibitors diazoacetyl-noleucine methyl ester and pepstatin. In terms of biological role, aspartic protease. Cleaves alpha-lactalbumin but not beta-lactoglobulin. The chain is Procardosin-B from Cynara cardunculus (Cardoon).